Consider the following 1379-residue polypeptide: ATPase histone chaperone YTA7 (1379 aa).

2 disordered regions span residues 1–39 (MARN…TTTR) and 54–243 (DFLE…NSRN). At Ala-2 the chain carries N-acetylalanine. 2 positions are modified to phosphoserine: Ser-11 and Ser-17. A compositionally biased stretch (basic and acidic residues) spans 61–78 (VMDKDETPVDVTSDEHHN). Position 94 is a phosphoserine (Ser-94). Basic and acidic residues predominate over residues 97–110 (ENARTNEELTNERN). 2 stretches are compositionally biased toward acidic residues: residues 119-152 (PEED…DEDS) and 170-184 (DPDD…DEEG). Residues 192-207 (SSKRLKRANSRRTRSS) show a composition bias toward basic residues. Residue Thr-212 is modified to Phosphothreonine. The segment covering 218-228 (RALRSRTRHSR) has biased composition (basic residues). Phosphothreonine is present on Thr-229. A phosphoserine mark is found at Ser-241, Ser-259, and Ser-285. The tract at residues 302-330 (NPSPARRGRGGWNASQNSGPTRRLFPTGG) is disordered. Residues Ser-367, Ser-369, and Ser-370 each carry the phosphoserine modification. The disordered stretch occupies residues 375–396 (LPLGVTPKTKKENTQKKKKKKP). An AAA-ATPase; required for its chromatin boundary function region spans residues 450–578 (VLFHGPPGTG…PALRRPGRFD (129 aa)). 454–461 (GPPGTGKT) lines the ATP pocket. The residue at position 735 (Ser-735) is a Phosphoserine. In terms of domain architecture, Bromo spans 974–1101 (RLKNVLKIKL…ANAQMGIEEI (128 aa)). Position 1142 is a phosphoserine (Ser-1142). Disordered regions lie at residues 1233–1274 (TCTS…ANTN) and 1291–1316 (LHET…GKKS). Positions 1244–1254 (ERARKEPKENE) are enriched in basic and acidic residues. Phosphoserine is present on Ser-1256. Positions 1256 to 1274 (SLQTQVTEENFSKIDANTN) are enriched in polar residues. The span at 1293–1316 (ETVEKRERSPIPKEVVEPEQGKKS) shows a compositional bias: basic and acidic residues.

The protein belongs to the AAA ATPase family. Interacts with CSE4/CENP-A. Interacts with SCM3. Interacts with SPT16. Interacts with POB3. Interacts with the casein kinase II complex subunits CKA1, CKA2, CKB1 and CKB2. Interacts with RNA polymerase II. Interacts (via Bromo domain) with histone H3. Interacts (via Bromo domain) with histone H4. In terms of processing, phosphorylated by CDK1 and casein kinase II during S-phase, which leads to its eviction from histone gene promoters and promotes histone gene transcription.

It is found in the chromosome. The protein localises to the centromere. Its subcellular location is the nucleus. Functionally, functions as an ATP-dependent nucleosome disassembly factor that helps evict canonical histone H3 from the 5'-end of genes upon their induction. Also contributes to kinetochore assembly by cooperating with SCM3 to load the histone H3 variant CSE4/CENP-A at centromeres. Provides a chromatin boundary function at the 5'-end of genes that restricts access by RTT106 and thus prevents ectopic spreading of repressive chromatin into coding regions. Also prevents heterochromatin spreading downstream of the silent mating-type locus HMR, this function is independent of the tRNA boundary element. Contributes to appropriate cell cycle regulation of histone gene expression by recruiting RNA polymerase II to histone genes, and subsequent CDK1- and casein kinase II-dependent eviction from chromatin is required to promote transcriptional elongation. The polypeptide is ATPase histone chaperone YTA7 (Saccharomyces cerevisiae (strain ATCC 204508 / S288c) (Baker's yeast)).